Here is a 45-residue protein sequence, read N- to C-terminus: Large ribosomal subunit protein bL36 (45 aa).

The protein belongs to the bacterial ribosomal protein bL36 family.

This is Large ribosomal subunit protein bL36 from Aliivibrio salmonicida (strain LFI1238) (Vibrio salmonicida (strain LFI1238)).